The sequence spans 352 residues: Histidinol-phosphate aminotransferase (352 aa).

Position 210 is an N6-(pyridoxal phosphate)lysine (Lys210).

It belongs to the class-II pyridoxal-phosphate-dependent aminotransferase family. Histidinol-phosphate aminotransferase subfamily. Homodimer. Pyridoxal 5'-phosphate serves as cofactor.

It catalyses the reaction L-histidinol phosphate + 2-oxoglutarate = 3-(imidazol-4-yl)-2-oxopropyl phosphate + L-glutamate. It participates in amino-acid biosynthesis; L-histidine biosynthesis; L-histidine from 5-phospho-alpha-D-ribose 1-diphosphate: step 7/9. The polypeptide is Histidinol-phosphate aminotransferase (Clostridium acetobutylicum (strain ATCC 824 / DSM 792 / JCM 1419 / IAM 19013 / LMG 5710 / NBRC 13948 / NRRL B-527 / VKM B-1787 / 2291 / W)).